A 484-amino-acid polypeptide reads, in one-letter code: Oxysterol-binding protein-related protein 2 (484 aa).

A phosphoserine mark is found at S19 and S20. The tract at residues 35–61 (DLDTSKSTRSGKNGEKPQQENGIQKHR) is disordered. A 1,2-diacyl-sn-glycero-3-phospho-(1D-myo-inositol-4,5-bisphosphate)-binding positions include K90 and 178-179 (HH). 2 stretches are compositionally biased toward basic and acidic residues: residues 319–340 (KQEK…EKAN) and 424–450 (SQEK…EWRT). Disordered regions lie at residues 319 to 348 (KQEK…GDVA) and 423 to 454 (ASQE…RWFS). A 1,2-diacyl-sn-glycero-3-phospho-(1D-myo-inositol-4,5-bisphosphate) is bound at residue 431-435 (EEKQR).

The protein belongs to the OSBP family. In terms of assembly, monomer. Homotetramer; phosphatidylinositol-4,5-bisphosphate binding promotes formation of stable tetramers. Interacts with DIAPH1. As to expression, detected in cochlea, in inner and outer hair cells in the organ of Corti (at protein level).

It is found in the cytoplasm. The protein localises to the cytosol. The protein resides in the lipid droplet. It localises to the cell membrane. Its function is as follows. Intracellular transport protein that binds sterols and phospholipids and mediates lipid transport between intracellular compartments. Increases plasma membrane cholesterol levels and decreases phosphatidylinositol-4,5-bisphosphate levels in the cell membrane. Binds phosphoinositides, such as phosphatidylinositol-4,5-bisphosphate. Exhibits strong binding to phosphatidic acid and weak binding to phosphatidylinositol 3-phosphate. Binds cholesterol, dehydroergosterol, 22(R)-hydroxycholesterol and 25-hydroxycholesterol (in vitro). In Mus musculus (Mouse), this protein is Oxysterol-binding protein-related protein 2 (Osbpl2).